The primary structure comprises 255 residues: Small ribosomal subunit protein eS1 (255 aa).

Residue Ala2 is modified to N-acetylalanine; partial.

Belongs to the eukaryotic ribosomal protein eS1 family. As to quaternary structure, component of the small ribosomal subunit. Mature ribosomes consist of a small (40S) and a large (60S) subunit. The 40S subunit contains about 33 different proteins and 1 molecule of RNA (18S). The 60S subunit contains about 49 different proteins and 3 molecules of RNA (25S, 5.8S and 5S).

The protein localises to the cytoplasm. In Vanderwaltozyma polyspora (strain ATCC 22028 / DSM 70294 / BCRC 21397 / CBS 2163 / NBRC 10782 / NRRL Y-8283 / UCD 57-17) (Kluyveromyces polysporus), this protein is Small ribosomal subunit protein eS1.